A 257-amino-acid polypeptide reads, in one-letter code: S-methyl-5'-thioadenosine phosphorylase (257 aa).

Phosphate-binding positions include S10, 50–51 (RH), and 83–84 (TA). M180 is a binding site for substrate. Position 181 (T181) interacts with phosphate. 204 to 206 (DYD) is a substrate binding site.

This sequence belongs to the PNP/MTAP phosphorylase family. MTAP subfamily. Homohexamer. Dimer of a homotrimer.

The catalysed reaction is S-methyl-5'-thioadenosine + phosphate = 5-(methylsulfanyl)-alpha-D-ribose 1-phosphate + adenine. It catalyses the reaction adenosine + phosphate = alpha-D-ribose 1-phosphate + adenine. It participates in amino-acid biosynthesis; L-methionine biosynthesis via salvage pathway; S-methyl-5-thio-alpha-D-ribose 1-phosphate from S-methyl-5'-thioadenosine (phosphorylase route): step 1/1. Functionally, catalyzes the reversible phosphorylation of S-methyl-5'-thioadenosine (MTA) to adenine and 5-methylthioribose-1-phosphate. Involved in the breakdown of MTA, a major by-product of polyamine biosynthesis. Responsible for the first step in the methionine salvage pathway after MTA has been generated from S-adenosylmethionine. Has broad substrate specificity with 6-aminopurine nucleosides as preferred substrates. Can also use adenosine as substrate to form ribose 1-phosphate. The polypeptide is S-methyl-5'-thioadenosine phosphorylase (Thermococcus kodakarensis (strain ATCC BAA-918 / JCM 12380 / KOD1) (Pyrococcus kodakaraensis (strain KOD1))).